A 359-amino-acid chain; its full sequence is DNA polymerase IV (359 aa).

A UmuC domain is found at isoleucine 6–glycine 186. Mg(2+)-binding residues include aspartate 10 and aspartate 104. Residue glutamate 105 is part of the active site.

Belongs to the DNA polymerase type-Y family. Monomer. Mg(2+) is required as a cofactor.

The protein resides in the cytoplasm. The catalysed reaction is DNA(n) + a 2'-deoxyribonucleoside 5'-triphosphate = DNA(n+1) + diphosphate. Its function is as follows. Poorly processive, error-prone DNA polymerase involved in untargeted mutagenesis. Copies undamaged DNA at stalled replication forks, which arise in vivo from mismatched or misaligned primer ends. These misaligned primers can be extended by PolIV. Exhibits no 3'-5' exonuclease (proofreading) activity. May be involved in translesional synthesis, in conjunction with the beta clamp from PolIII. This is DNA polymerase IV from Akkermansia muciniphila (strain ATCC BAA-835 / DSM 22959 / JCM 33894 / BCRC 81048 / CCUG 64013 / CIP 107961 / Muc).